The sequence spans 530 residues: Protein P80 (530 aa).

Positions 1-22 (MKVISGLLFFILISCSLFLVQG) are cleaved as a signal peptide. A helical membrane pass occupies residues 491–511 (MLVAMTFNVALFFAVIAGVLV).

Belongs to the SLC31A transporter family.

The protein resides in the late endosome membrane. This is Protein P80 (p80) from Dictyostelium discoideum (Social amoeba).